The following is a 232-amino-acid chain: tRNA1(Val) (adenine(37)-N6)-methyltransferase (232 aa).

The protein belongs to the methyltransferase superfamily. tRNA (adenine-N(6)-)-methyltransferase family.

The protein localises to the cytoplasm. It carries out the reaction adenosine(37) in tRNA1(Val) + S-adenosyl-L-methionine = N(6)-methyladenosine(37) in tRNA1(Val) + S-adenosyl-L-homocysteine + H(+). Its function is as follows. Specifically methylates the adenine in position 37 of tRNA(1)(Val) (anticodon cmo5UAC). This chain is tRNA1(Val) (adenine(37)-N6)-methyltransferase, found in Haemophilus influenzae (strain 86-028NP).